Here is a 1105-residue protein sequence, read N- to C-terminus: Protein phosphatase 1 regulatory subunit 26 (1105 aa).

Disordered regions lie at residues 228–382 (LNDK…NKLA), 444–468 (QSTY…DSLV), 504–526 (TSPE…AKAM), and 589–748 (LNRG…DSDD). The segment covering 275-285 (LLRKHASDSKL) has biased composition (basic and acidic residues). A compositionally biased stretch (low complexity) spans 306–317 (TKTSSPSPKSTP). Residues 359–368 (SPTSANSLTH) are compositionally biased toward polar residues. Pro residues predominate over residues 451–460 (TEPPPPPPEP). The span at 504 to 516 (TSPELGSQSSKLS) shows a compositional bias: polar residues. A compositionally biased stretch (low complexity) spans 602 to 612 (SYSSGDKSSSL). Residues 628–647 (SKRKYKKRPKDGKSQCKKRV) show a composition bias toward basic residues. Basic and acidic residues predominate over residues 686-701 (NSLEKSKKRREEKAVE). The segment covering 705–715 (PSCSSSPQGNK) has biased composition (polar residues). Over residues 733–742 (RALDDAHESS) the composition is skewed to basic and acidic residues.

Its subcellular location is the nucleus. It localises to the nucleolus. May inhibit phosphatase activity of protein phosphatase 1 (PP1) complexes. May positively regulate cell proliferation. This is Protein phosphatase 1 regulatory subunit 26 (ppp1r26) from Xenopus laevis (African clawed frog).